The following is a 262-amino-acid chain: MQTIIRVEKLAKTFNQHQALHAVALNIHHGEMVALLGPSGSGKSTLLRHLSGLITGDKSAGSHIELLGRTVQREGRLARDIRKSRANTGYIFQQFNLVNRLSVLENVLIGALGSTPFWRTCFSWFTREQKQRALQALTRVGMVHFAHQRVSTLSGGQQQRVAIARALMQQAKVILADEPIASLDPESARIVMDTLRDINQNDGITVVVTLHQVDYALRYCERIVALRQGHVFYDGSSQQFDNERFDHLYRSINRIEENAKAA.

The ABC transporter domain occupies 5-253 (IRVEKLAKTF…RFDHLYRSIN (249 aa)). 37–44 (GPSGSGKS) is an ATP binding site.

This sequence belongs to the ABC transporter superfamily. Phosphonates importer (TC 3.A.1.9.1) family. As to quaternary structure, the complex is composed of two ATP-binding proteins (PhnC), two transmembrane proteins (PhnE) and a solute-binding protein (PhnD).

The protein resides in the cell inner membrane. It catalyses the reaction phosphonate(out) + ATP + H2O = phosphonate(in) + ADP + phosphate + H(+). Its function is as follows. Part of the ABC transporter complex PhnCDE involved in phosphonates import. Responsible for energy coupling to the transport system. The sequence is that of Phosphonates import ATP-binding protein PhnC from Shigella sonnei (strain Ss046).